The sequence spans 1261 residues: Myosin-1 (1261 aa).

The interval 1–39 is disordered; it reads MGHSRRPVGGEKKSRGFGRSKVADVGDGRQAGKPQVKKA. In terms of domain architecture, Myosin motor spans 49–728; it reads IGVSDLTLLS…TLFALEAMRD (680 aa). 142 to 149 serves as a coordination point for ATP; sequence GESGAGKT. Position 370 is a phosphoserine (Ser370). The tract at residues 417 to 499 is actin-binding; the sequence is SIGILDIYGF…PGVFAALNDA (83 aa). 2 consecutive IQ domains span residues 732-752 and 753-778; these read HNMA…RIEC and AIRI…QGHQ. Residues 786-973 form the TH1 domain; that stretch reads RRRMSLLGSR…KSHTIHTSPG (188 aa). Disordered stretches follow at residues 956–1093 and 1139–1261; these read ASPN…KALY and YLEE…DDEW. 4 stretches are compositionally biased toward pro residues: residues 1019-1029, 1038-1052, 1072-1084, and 1147-1159; these read RPTPKPQPLPQ, IPAP…PVPQ, APPP…PPAP, and TPKP…PPAA. The region spanning 1084–1145 is the SH3 domain; that stretch reads PKKATAKALY…PQAYLEEQVA (62 aa). Positions 1160-1181 are enriched in low complexity; that stretch reads PRASPVPSANGAAATAAAAKAK. Residues 1212 to 1233 are compositionally biased toward polar residues; it reads VSMNSQDSSGGSGRGTPNSTSN. Positions 1234–1243 are enriched in low complexity; the sequence is ASLAGGLAEA.

This sequence belongs to the TRAFAC class myosin-kinesin ATPase superfamily. Myosin family. Phosphorylation of the TEDS site (Ser-370) is required for the polarization of the actin cytoskeleton. Phosphorylation probably activates the myosin-I ATPase activity.

Its subcellular location is the cytoplasm. The protein resides in the cytoskeleton. It is found in the actin patch. In terms of biological role, type-I myosin implicated in the organization of the actin cytoskeleton. Required for proper actin cytoskeleton polarization. At the cell cortex, assembles in patch-like structures together with proteins from the actin-polymerizing machinery and promotes actin assembly. Functions as actin nucleation-promoting factor (NPF) for the Arp2/3 complex. Plays an important role in polarized growth, spore germination, hyphal morphogenesis, and septal wall formation. This Aspergillus oryzae (strain ATCC 42149 / RIB 40) (Yellow koji mold) protein is Myosin-1 (myoA).